A 452-amino-acid chain; its full sequence is Mitochondrial distribution and morphology protein 10 (452 aa).

This sequence belongs to the MDM10 family. As to quaternary structure, component of the ER-mitochondria encounter structure (ERMES) or MDM complex, composed of MMM1, MDM10, MDM12 and MDM34. Associates with the mitochondrial outer membrane sorting assembly machinery SAM(core) complex.

It is found in the mitochondrion outer membrane. Component of the ERMES/MDM complex, which serves as a molecular tether to connect the endoplasmic reticulum and mitochondria. Components of this complex are involved in the control of mitochondrial shape and protein biogenesis and may function in phospholipid exchange. MDM10 is involved in the late assembly steps of the general translocase of the mitochondrial outer membrane (TOM complex). Functions in the TOM40-specific route of the assembly of outer membrane beta-barrel proteins, including the association of TOM40 with the receptor TOM22 and small TOM proteins. Can associate with the SAM(core) complex as well as the MDM12-MMM1 complex, both involved in late steps of the major beta-barrel assembly pathway, that is responsible for biogenesis of all outer membrane beta-barrel proteins. May act as a switch that shuttles between both complexes and channels precursor proteins into the TOM40-specific pathway. Plays a role in mitochondrial morphology and in the inheritance of mitochondria. This is Mitochondrial distribution and morphology protein 10 from Kluyveromyces lactis (strain ATCC 8585 / CBS 2359 / DSM 70799 / NBRC 1267 / NRRL Y-1140 / WM37) (Yeast).